Reading from the N-terminus, the 466-residue chain is Phytase A (466 aa).

Positions 1-19 (MGFLAIVLSVALLFRSTSG) are cleaved as a signal peptide. C31 and C40 are oxidised to a cystine. Residues Y51, R81, H82, R85, and T88 each contribute to the 1D-myo-inositol hexakisphosphate site. Intrachain disulfides connect C71–C414, C215–C465, C264–C282, and C436–C444. The active-site Nucleophile is the H82. The N-linked (GlcNAc...) asparagine glycan is linked to N120. R165 contributes to the 1D-myo-inositol hexakisphosphate binding site. 2 N-linked (GlcNAc...) asparagine glycosylation sites follow: N207 and N230. K301 serves as a coordination point for 1D-myo-inositol hexakisphosphate. Residues N339 and N352 are each glycosylated (N-linked (GlcNAc...) asparagine). 1D-myo-inositol hexakisphosphate contacts are provided by H361 and D362. Residue N376 is glycosylated (N-linked (GlcNAc...) asparagine).

This sequence belongs to the histidine acid phosphatase family. As to quaternary structure, monomer.

The protein localises to the secreted. The enzyme catalyses 1D-myo-inositol hexakisphosphate + H2O = 1D-myo-inositol 1,2,4,5,6-pentakisphosphate + phosphate. It catalyses the reaction 1D-myo-inositol 1,2,4,5,6-pentakisphosphate + H2O = 1D-myo-inositol 1,2,5,6-tetrakisphosphate + phosphate. The catalysed reaction is 1D-myo-inositol 1,2,5,6-tetrakisphosphate + H2O = 1D-myo-inositol 1,2,6-trisphosphate + phosphate. It carries out the reaction 1D-myo-inositol 1,2,6-trisphosphate + H2O = 1D-myo-inositol 1,2-bisphosphate + phosphate. The enzyme catalyses 1D-myo-inositol 1,2-bisphosphate + H2O = 1D-myo-inositol 2-phosphate + phosphate. Its function is as follows. Catalyzes the phosphate monoester hydrolysis of phytic acid (myo-inositol hexakisphosphate), which results in the stepwise formation of myo-inositol pentakis-, tetrakis-, tris-, bis-, and monophosphates, as well as the liberation of inorganic phosphate. Myo-inositol 2-monophosphate is the end product. Has a broad substrate specificity and is also able to dephosphorylate other classic acid phosphatase substrates such as p-nitrophenyl phosphate, phenyl phosphate, fructose 1,6-bisphosphate, glucose 6-phosphate, 3-phosphoglycerate, as well as ADP and ATP. The polypeptide is Phytase A (Aspergillus terreus).